The primary structure comprises 176 residues: NAD(P)H-quinone oxidoreductase subunit 6, chloroplastic (176 aa).

The next 5 membrane-spanning stretches (helical) occupy residues 10-30, 32-52, 61-81, 92-112, and 152-172; these read ILLV…VLFT, PIFS…FHIL, AQLL…VMFM, LWTV…FSLI, and FYLP…GAIA.

The protein belongs to the complex I subunit 6 family. NDH is composed of at least 16 different subunits, 5 of which are encoded in the nucleus.

Its subcellular location is the plastid. It is found in the chloroplast thylakoid membrane. The catalysed reaction is a plastoquinone + NADH + (n+1) H(+)(in) = a plastoquinol + NAD(+) + n H(+)(out). It catalyses the reaction a plastoquinone + NADPH + (n+1) H(+)(in) = a plastoquinol + NADP(+) + n H(+)(out). In terms of biological role, NDH shuttles electrons from NAD(P)H:plastoquinone, via FMN and iron-sulfur (Fe-S) centers, to quinones in the photosynthetic chain and possibly in a chloroplast respiratory chain. The immediate electron acceptor for the enzyme in this species is believed to be plastoquinone. Couples the redox reaction to proton translocation, and thus conserves the redox energy in a proton gradient. This is NAD(P)H-quinone oxidoreductase subunit 6, chloroplastic (ndhG) from Drimys granadensis.